A 235-amino-acid polypeptide reads, in one-letter code: Claudin-15 (235 aa).

A topological domain (cytoplasmic) is located at residue Met-1. A helical membrane pass occupies residues 2–24; that stretch reads LVAVEIFGFFLTAVGLLMLGVTL. The Extracellular segment spans residues 25-74; it reads AHSSWRVSTVHGNVITTNTIFENLWYSCATDSMGVHNCWEFPSMLALSGY. An intrachain disulfide couples Cys-52 to Cys-62. Residues 75 to 99 form a helical membrane-spanning segment; the sequence is IQACRALMITAILLGFLGLFLGMVG. Over 100–115 the chain is Cytoplasmic; that stretch reads LRCTNIGGLELSRKTK. Residue Ser-111 is modified to Phosphoserine. Residues 116 to 140 form a helical membrane-spanning segment; the sequence is LAATAGALHILAGICGMVAVSWYAF. At 141–159 the chain is on the extracellular side; it reads NITRDFFNPLYAGTKYELG. Residues 146 to 147 are important for the formation of tight-junction strand-like structures; the sequence is FF. Residues 160 to 182 traverse the membrane as a helical segment; the sequence is PALYLGWSACLLAILGGICLFSN. Residues 183–235 are Cytoplasmic-facing; that stretch reads CCCSRDRDPATGVQLPYKAPVIPAASLAARLPAAASDEEGDSSFGKYGKNAYV. A phosphoserine mark is found at Ser-218 and Ser-225.

Belongs to the claudin family. As to quaternary structure, can form homo- and heteropolymeric tight junction strands. Palmitoylated.

It localises to the cell junction. The protein resides in the tight junction. Its subcellular location is the cell membrane. It carries out the reaction Na(+)(in) = Na(+)(out). It catalyses the reaction K(+)(in) = K(+)(out). The enzyme catalyses Cs(+)(in) = Cs(+)(out). The catalysed reaction is Rb(+)(in) = Rb(+)(out). It carries out the reaction Li(+)(in) = Li(+)(out). It catalyses the reaction NH4(+)(in) = NH4(+)(out). The enzyme catalyses methylamine(out) = methylamine(in). The catalysed reaction is H2O(in) = H2O(out). Functionally, forms paracellular channels: polymerizes in tight junction strands with cation- and water-selective channels through the strands, conveying epithelial permeability in a process known as paracellular tight junction permeability. In intestinal epithelium, allows for sodium and water fluxes from the peritoneal side to the lumen of the intestine to regulate nutrient absorption and intestinal morphogenesis. This Bos taurus (Bovine) protein is Claudin-15 (CLDN15).